The following is a 358-amino-acid chain: DnaJ homolog subfamily C member 18 (358 aa).

Residues 82-146 enclose the J domain; sequence NYYEILGVSR…DKRLRYDEYG (65 aa). A helical membrane pass occupies residues 228–248; it reads AFIQLLPVLVIVIISVITQLL.

The protein localises to the endoplasmic reticulum membrane. (Microbial infection) In case of infection by polyomavirus, involved in the virus endoplasmic reticulum membrane penetration and infection. Regulates the recruitment of DNAJB12:DNAJB14 into SV40-induced foci and all cooperate to guide SV40 across the endoplasmic reticulum membrane. The foci represent the site from which SV40 penetrates into the cytosol. This chain is DnaJ homolog subfamily C member 18, found in Homo sapiens (Human).